Reading from the N-terminus, the 894-residue chain is Septin and tuftelin-interacting protein 1 homolog (894 aa).

2 disordered regions span residues 71–149 (YEPN…DKPV) and 187–225 (NAGL…RSLG). Residues 73 to 84 (PNEHKLKNKDGE) show a composition bias toward basic and acidic residues. A compositionally biased stretch (basic residues) spans 97-126 (KKKKKEKKEKKQKKKEKKEKKEKKNKKKNK). The G-patch domain maps to 149–195 (VGGIGAALLSKMGYKGTGGLGRDGGGMVEPIKVQVRPKNAGLASVTE). Over residues 202–217 (DDSDDSDQSEGDTDSD) the composition is skewed to acidic residues. Positions 329 to 449 (KQIDIQNQDN…SDNNDNSSLE (121 aa)) form a coiled coil. The disordered stretch occupies residues 785–821 (NNNNNNNINNSYQQQNQQQPIKPISSPSLNSSNNNNI).

Belongs to the TFP11/STIP family. In terms of assembly, identified in the spliceosome C complex.

It localises to the cytoplasm. The protein localises to the nucleus. Functionally, may be involved in pre-mRNA splicing. The chain is Septin and tuftelin-interacting protein 1 homolog (stip-1) from Dictyostelium discoideum (Social amoeba).